A 238-amino-acid chain; its full sequence is Large ribosomal subunit protein uL1 (238 aa).

Belongs to the universal ribosomal protein uL1 family. In terms of assembly, part of the 50S ribosomal subunit.

In terms of biological role, binds directly to 23S rRNA. The L1 stalk is quite mobile in the ribosome, and is involved in E site tRNA release. Its function is as follows. Protein L1 is also a translational repressor protein, it controls the translation of the L11 operon by binding to its mRNA. The protein is Large ribosomal subunit protein uL1 of Trichormus variabilis (strain ATCC 29413 / PCC 7937) (Anabaena variabilis).